We begin with the raw amino-acid sequence, 456 residues long: Bifunctional protein GlmU (456 aa).

A pyrophosphorylase region spans residues 1–229 (MYKSAVILAA…PDEIKGVNSR (229 aa)). UDP-N-acetyl-alpha-D-glucosamine is bound by residues 8-11 (LAAG), lysine 22, glutamine 73, and 78-79 (GT). Residue aspartate 103 coordinates Mg(2+). Residues glycine 140, glutamate 155, asparagine 170, and asparagine 227 each coordinate UDP-N-acetyl-alpha-D-glucosamine. Asparagine 227 is a binding site for Mg(2+). A linker region spans residues 230 to 250 (GQLAEAEEILRLRINERHMEN). Residues 251-456 (GVTLIDPKNT…GWVAKKGLKK (206 aa)) form an N-acetyltransferase region. 2 residues coordinate UDP-N-acetyl-alpha-D-glucosamine: arginine 332 and lysine 350. Histidine 362 serves as the catalytic Proton acceptor. UDP-N-acetyl-alpha-D-glucosamine is bound by residues tyrosine 365 and asparagine 376. Acetyl-CoA contacts are provided by residues 385–386 (NY), alanine 422, and arginine 439.

It in the N-terminal section; belongs to the N-acetylglucosamine-1-phosphate uridyltransferase family. The protein in the C-terminal section; belongs to the transferase hexapeptide repeat family. Homotrimer. It depends on Mg(2+) as a cofactor.

Its subcellular location is the cytoplasm. The catalysed reaction is alpha-D-glucosamine 1-phosphate + acetyl-CoA = N-acetyl-alpha-D-glucosamine 1-phosphate + CoA + H(+). It catalyses the reaction N-acetyl-alpha-D-glucosamine 1-phosphate + UTP + H(+) = UDP-N-acetyl-alpha-D-glucosamine + diphosphate. It participates in nucleotide-sugar biosynthesis; UDP-N-acetyl-alpha-D-glucosamine biosynthesis; N-acetyl-alpha-D-glucosamine 1-phosphate from alpha-D-glucosamine 6-phosphate (route II): step 2/2. It functions in the pathway nucleotide-sugar biosynthesis; UDP-N-acetyl-alpha-D-glucosamine biosynthesis; UDP-N-acetyl-alpha-D-glucosamine from N-acetyl-alpha-D-glucosamine 1-phosphate: step 1/1. The protein operates within bacterial outer membrane biogenesis; LPS lipid A biosynthesis. In terms of biological role, catalyzes the last two sequential reactions in the de novo biosynthetic pathway for UDP-N-acetylglucosamine (UDP-GlcNAc). The C-terminal domain catalyzes the transfer of acetyl group from acetyl coenzyme A to glucosamine-1-phosphate (GlcN-1-P) to produce N-acetylglucosamine-1-phosphate (GlcNAc-1-P), which is converted into UDP-GlcNAc by the transfer of uridine 5-monophosphate (from uridine 5-triphosphate), a reaction catalyzed by the N-terminal domain. This chain is Bifunctional protein GlmU, found in Clostridium novyi (strain NT).